Here is a 459-residue protein sequence, read N- to C-terminus: Putrescine aminotransferase (459 aa).

Residues 150–151 (GT) and Q274 each bind pyridoxal 5'-phosphate. Residue K300 is modified to N6-(pyridoxal phosphate)lysine. T332 is a pyridoxal 5'-phosphate binding site.

This sequence belongs to the class-III pyridoxal-phosphate-dependent aminotransferase family. Putrescine aminotransferase subfamily. Pyridoxal 5'-phosphate is required as a cofactor.

The enzyme catalyses an alkane-alpha,omega-diamine + 2-oxoglutarate = an omega-aminoaldehyde + L-glutamate. It catalyses the reaction putrescine + 2-oxoglutarate = 1-pyrroline + L-glutamate + H2O. It carries out the reaction cadaverine + 2-oxoglutarate = 5-aminopentanal + L-glutamate. It functions in the pathway amine and polyamine degradation; putrescine degradation; 4-aminobutanal from putrescine (transaminase route): step 1/1. Functionally, catalyzes the aminotransferase reaction from putrescine to 2-oxoglutarate, leading to glutamate and 4-aminobutanal, which spontaneously cyclizes to form 1-pyrroline. This is the first step in one of two pathways for putrescine degradation, where putrescine is converted into 4-aminobutanoate (gamma-aminobutyrate or GABA) via 4-aminobutanal. Also functions as a cadaverine transaminase in a a L-lysine degradation pathway to succinate that proceeds via cadaverine, glutarate and L-2-hydroxyglutarate. This Klebsiella pneumoniae (strain 342) protein is Putrescine aminotransferase.